A 696-amino-acid polypeptide reads, in one-letter code: Polyribonucleotide nucleotidyltransferase (696 aa).

Mg(2+) is bound by residues Asp489 and Asp495. Residues 556–615 (PQYVTMKINPEKIRDVIGKGGVVIREITEATNCAIDISDDGTIKIAAHTTEEGEAAKRRI) enclose the KH domain. The S1 motif domain maps to 625–693 (GKVYEGTVVK…RQGRVRLSMK (69 aa)).

Belongs to the polyribonucleotide nucleotidyltransferase family. Component of the RNA degradosome, which is a multiprotein complex involved in RNA processing and mRNA degradation. Requires Mg(2+) as cofactor.

It is found in the cytoplasm. The catalysed reaction is RNA(n+1) + phosphate = RNA(n) + a ribonucleoside 5'-diphosphate. Involved in mRNA degradation. Catalyzes the phosphorolysis of single-stranded polyribonucleotides processively in the 3'- to 5'-direction. The sequence is that of Polyribonucleotide nucleotidyltransferase from Coxiella burnetii (strain CbuK_Q154) (Coxiella burnetii (strain Q154)).